Here is a 233-residue protein sequence, read N- to C-terminus: ATP-dependent Clp protease proteolytic subunit 1 (233 aa).

Residue S136 is the Nucleophile of the active site. H161 is a catalytic residue.

The protein belongs to the peptidase S14 family. Fourteen ClpP subunits assemble into 2 heptameric rings which stack back to back to give a disk-like structure with a central cavity, resembling the structure of eukaryotic proteasomes.

It is found in the cytoplasm. The enzyme catalyses Hydrolysis of proteins to small peptides in the presence of ATP and magnesium. alpha-casein is the usual test substrate. In the absence of ATP, only oligopeptides shorter than five residues are hydrolyzed (such as succinyl-Leu-Tyr-|-NHMec, and Leu-Tyr-Leu-|-Tyr-Trp, in which cleavage of the -Tyr-|-Leu- and -Tyr-|-Trp bonds also occurs).. Its function is as follows. Cleaves peptides in various proteins in a process that requires ATP hydrolysis. Has a chymotrypsin-like activity. Plays a major role in the degradation of misfolded proteins. The sequence is that of ATP-dependent Clp protease proteolytic subunit 1 from Bifidobacterium longum (strain NCC 2705).